Consider the following 130-residue polypeptide: RutC family protein slr0709 (130 aa).

It belongs to the RutC family.

The chain is RutC family protein slr0709 from Synechocystis sp. (strain ATCC 27184 / PCC 6803 / Kazusa).